A 477-amino-acid chain; its full sequence is Mitochondrial adenyl nucleotide antiporter SLC25A24 (477 aa).

Residues 1–174 (MHQLIRKFVF…RYWKKSTVLD (174 aa)) are regulatory N-terminal domain. The Mitochondrial intermembrane portion of the chain corresponds to 1-198 (MHQLIRKFVF…EKTTGMWWKQ (198 aa)). The region spanning 20 to 55 (DNTKSFAELFEKLDVNKDGKVDVSELKTGLAAMGFS) is the EF-hand 1 domain. Ca(2+) is bound by residues D33, N35, D37, K39, E44, D69, D71, D73, E80, D100, N102, D104, R106, E111, D136, D138, T140, T142, and E147. EF-hand domains follow at residues 87 to 122 (EHEK…LGIN) and 123 to 158 (LSDK…NPAE). The segment at 160–169 (LQQIIRYWKK) is linker region. Residues 175 to 477 (IGDSLTIPDE…YMRSGLGISK (303 aa)) are C-terminal transmembrane transporter domain. Solcar repeat units lie at residues 193–279 (GMWW…YKKL), 287–372 (VQSH…LKNT), and 384–472 (PGVL…MRSG). Residues 199–216 (LAAGGVAGAVSRTGTAPL) form a helical membrane-spanning segment. At 217 to 253 (DRMKVFMQVHSSKTNKISLVNGFKQMIKEGGVASLWR) the chain is on the mitochondrial matrix side. The helical transmembrane segment at 254 to 273 (GNGVNVIKIAPETAIKFMAY) threads the bilayer. Over 274–296 (EQYKKLLSKDGGKVQSHERFMAG) the chain is Mitochondrial intermembrane. The chain crosses the membrane as a helical span at residues 297 to 310 (SLAGATAQTAIYPM). Residues 311–346 (EVMKTRLTLRKTGQYSGMFDCAKKILRKEGVKAFYK) lie on the Mitochondrial matrix side of the membrane. A helical transmembrane segment spans residues 347 to 366 (GYVPNILGIIPYAGIDLAVY). Residues 367-389 (ETLKNTWLSHYAKDTANPGVLVL) lie on the Mitochondrial intermembrane side of the membrane. A helical membrane pass occupies residues 390 to 407 (LGCGTISSTCGQLASYPL). At 408–446 (ALIRTRMQAMASMEGSEQVSMSKLVKKIMQKEGFFGLYR) the chain is on the mitochondrial matrix side. A helical transmembrane segment spans residues 447–466 (GILPNFMKVIPAVSISYVVY). At 467-477 (EYMRSGLGISK) the chain is on the mitochondrial intermembrane side.

This sequence belongs to the mitochondrial carrier (TC 2.A.29) family. In terms of assembly, monomer.

The protein localises to the mitochondrion inner membrane. It catalyses the reaction Mg(2+)(out) + phosphate(in) + ATP(out) = Mg(2+)(in) + phosphate(out) + ATP(in). The catalysed reaction is ADP(out) + phosphate(in) + H(+)(out) = ADP(in) + phosphate(out) + H(+)(in). The enzyme catalyses AMP(out) + phosphate(in) = AMP(in) + phosphate(out). It carries out the reaction phosphate(in) + ATP(out) + 2 H(+)(out) = phosphate(out) + ATP(in) + 2 H(+)(in). It catalyses the reaction dADP(in) + ADP(out) = dADP(out) + ADP(in). The catalysed reaction is Mg(2+)(in) + ADP(out) + ATP(in) + H(+)(out) = Mg(2+)(out) + ADP(in) + ATP(out) + H(+)(in). The enzyme catalyses ADP(out) + diphosphate(in) = ADP(in) + diphosphate(out). It carries out the reaction dAMP(in) + ADP(out) + H(+)(out) = dAMP(out) + ADP(in) + H(+)(in). It catalyses the reaction 3'-AMP(in) + ADP(out) + H(+)(out) = 3'-AMP(out) + ADP(in) + H(+)(in). The catalysed reaction is dAMP(out) + phosphate(in) = dAMP(in) + phosphate(out). The enzyme catalyses 3'-AMP(out) + phosphate(in) = 3'-AMP(in) + phosphate(out). It carries out the reaction dADP(out) + phosphate(in) + H(+)(out) = dADP(in) + phosphate(out) + H(+)(in). Its activity is regulated as follows. Activated by an increase in cytosolic calcium levels that induce a conformational change of the N-terminal regulatory domain, uncapping the channel and allowing transport. Inhibited by bathophenanthroline, mersalyl, p-hydroxymercuribenzoate, bromcresol purple and tannic acid. In terms of biological role, electroneutral antiporter that mediates the transport of adenyl nucleotides through the inner mitochondrial membrane. Originally identified as an ATP-magnesium/inorganic phosphate antiporter, it also acts as a broad specificity adenyl nucleotide antiporter. By regulating the mitochondrial matrix adenyl nucleotide pool could adapt to changing cellular energetic demands and indirectly regulate adenyl nucleotide-dependent metabolic pathways. This chain is Mitochondrial adenyl nucleotide antiporter SLC25A24 (slc25a24), found in Danio rerio (Zebrafish).